Consider the following 364-residue polypeptide: DNA polymerase IV (364 aa).

The UmuC domain maps to 6-186 (IIHIDMDAFY…LPIESFWGVG (181 aa)). Positions 10 and 104 each coordinate Mg(2+). Residue glutamate 105 is part of the active site.

The protein belongs to the DNA polymerase type-Y family. Monomer. Mg(2+) serves as cofactor.

The protein localises to the cytoplasm. The catalysed reaction is DNA(n) + a 2'-deoxyribonucleoside 5'-triphosphate = DNA(n+1) + diphosphate. In terms of biological role, poorly processive, error-prone DNA polymerase involved in untargeted mutagenesis. Copies undamaged DNA at stalled replication forks, which arise in vivo from mismatched or misaligned primer ends. These misaligned primers can be extended by PolIV. Exhibits no 3'-5' exonuclease (proofreading) activity. May be involved in translesional synthesis, in conjunction with the beta clamp from PolIII. This chain is DNA polymerase IV, found in Bacteroides fragilis (strain YCH46).